The sequence spans 425 residues: Histidine--tRNA ligase (425 aa).

It belongs to the class-II aminoacyl-tRNA synthetase family. As to quaternary structure, homodimer.

The protein resides in the cytoplasm. It carries out the reaction tRNA(His) + L-histidine + ATP = L-histidyl-tRNA(His) + AMP + diphosphate + H(+). The polypeptide is Histidine--tRNA ligase (Shewanella sp. (strain ANA-3)).